A 317-amino-acid chain; its full sequence is Aspartate carbamoyltransferase catalytic subunit (317 aa).

Carbamoyl phosphate is bound by residues Arg66 and Thr67. Residue Lys94 coordinates L-aspartate. The carbamoyl phosphate site is built by Arg116, His144, and Gln147. L-aspartate is bound by residues Arg177 and Arg231. Residues Gly272 and Pro273 each coordinate carbamoyl phosphate.

This sequence belongs to the aspartate/ornithine carbamoyltransferase superfamily. ATCase family. In terms of assembly, heterododecamer (2C3:3R2) of six catalytic PyrB chains organized as two trimers (C3), and six regulatory PyrI chains organized as three dimers (R2).

It catalyses the reaction carbamoyl phosphate + L-aspartate = N-carbamoyl-L-aspartate + phosphate + H(+). It participates in pyrimidine metabolism; UMP biosynthesis via de novo pathway; (S)-dihydroorotate from bicarbonate: step 2/3. Catalyzes the condensation of carbamoyl phosphate and aspartate to form carbamoyl aspartate and inorganic phosphate, the committed step in the de novo pyrimidine nucleotide biosynthesis pathway. This Nitrobacter hamburgensis (strain DSM 10229 / NCIMB 13809 / X14) protein is Aspartate carbamoyltransferase catalytic subunit.